The sequence spans 173 residues: MSEQLVAVGVLSRPHGIKGEIRLIRYTDSIDVFLGEVFLQKSNSLPKKAEIISSRIHQGVALVCFKGFSDRSAVEVLRGQTLLVSRSFLPEIESNESYLCDLLGFSVVLDNTDEVIGKLEYVSFPGGQELWSIITPEGKEVLLPAIPEFVLEVDTNAQLIRINPPKGLLELYK.

Residues 94–168 (SNESYLCDLL…LIRINPPKGL (75 aa)) enclose the PRC barrel domain.

The protein belongs to the RimM family. In terms of assembly, binds ribosomal protein uS19.

The protein resides in the cytoplasm. Functionally, an accessory protein needed during the final step in the assembly of 30S ribosomal subunit, possibly for assembly of the head region. Essential for efficient processing of 16S rRNA. May be needed both before and after RbfA during the maturation of 16S rRNA. It has affinity for free ribosomal 30S subunits but not for 70S ribosomes. In Lawsonia intracellularis (strain PHE/MN1-00), this protein is Ribosome maturation factor RimM.